Reading from the N-terminus, the 517-residue chain is Alpha,alpha-trehalose-phosphate synthase [UDP-forming] 1 (517 aa).

The D-glucose 6-phosphate site is built by Tyr98 and Asp152. 2 residues coordinate UDP: Arg288 and Lys293. UDP-alpha-D-glucose is bound by residues Arg288 and Lys293. D-glucose 6-phosphate is bound at residue Arg326. 387–395 (DGMNLVAYE) contributes to the UDP-alpha-D-glucose binding site. 391-395 (LVAYE) serves as a coordination point for UDP. Residues 486–517 (FHAKKASFSDNNSENGEPSNGVETPAQEQVAQ) are disordered. A compositionally biased stretch (polar residues) spans 493–517 (FSDNNSENGEPSNGVETPAQEQVAQ).

It belongs to the glycosyltransferase 20 family.

The enzyme catalyses D-glucose 6-phosphate + UDP-alpha-D-glucose = alpha,alpha-trehalose 6-phosphate + UDP + H(+). It functions in the pathway carbohydrate biosynthesis. Its function is as follows. Synthase catalytic subunit of the trehalose synthase complex that catalyzes the production of trehalose from glucose-6-phosphate and UDP-alpha-D-glucose in a two step process. The polypeptide is Alpha,alpha-trehalose-phosphate synthase [UDP-forming] 1 (Aspergillus niger).